Here is a 353-residue protein sequence, read N- to C-terminus: Guanine nucleotide-binding protein subunit alpha (353 aa).

Residues 1-25 form a disordered region; that stretch reads MGCGMSTEDKEGKARNEEIENQLKR. Gly-2 carries the N-myristoyl glycine lipid modification. Cys-3 is lipidated: S-palmitoyl cysteine. Positions 7–25 are enriched in basic and acidic residues; it reads TEDKEGKARNEEIENQLKR. The G-alpha domain maps to 32 to 353; that stretch reads NEIKMLLLGA…QENLRLCGLI (322 aa). A G1 motif region spans residues 35 to 48; that stretch reads KMLLLGAGESGKST. The GTP site is built by Glu-43, Ser-44, Gly-45, Lys-46, Ser-47, Thr-48, Asp-150, Leu-175, Thr-181, Gly-203, Asn-269, Lys-270, Asp-272, and Ala-325. Ser-47 contacts Mg(2+). The interval 173-181 is G2 motif; it reads DVLRSRVKT. Position 181 (Thr-181) interacts with Mg(2+). A G3 motif region spans residues 196-205; the sequence is YRMFDVGGQR. Residues 265–272 form a G4 motif region; sequence ILFLNKID. The G5 motif stretch occupies residues 323-328; that stretch reads TCATDT.

This sequence belongs to the G-alpha family. G(q) subfamily. G proteins are composed of 3 units; alpha, beta and gamma. The alpha chain contains the guanine nucleotide binding site. Requires Mg(2+) as cofactor.

In terms of biological role, guanine nucleotide-binding proteins (G proteins) are involved as modulators or transducers in various transmembrane signaling systems. This chain is Guanine nucleotide-binding protein subunit alpha (CTG1), found in Colletotrichum trifolii.